The sequence spans 515 residues: ATP synthase subunit alpha (515 aa).

171 to 178 is a binding site for ATP; that stretch reads GDRQTGKT.

It belongs to the ATPase alpha/beta chains family. F-type ATPases have 2 components, CF(1) - the catalytic core - and CF(0) - the membrane proton channel. CF(1) has five subunits: alpha(3), beta(3), gamma(1), delta(1), epsilon(1). CF(0) has three main subunits: a(1), b(2) and c(9-12). The alpha and beta chains form an alternating ring which encloses part of the gamma chain. CF(1) is attached to CF(0) by a central stalk formed by the gamma and epsilon chains, while a peripheral stalk is formed by the delta and b chains.

The protein localises to the cell inner membrane. The catalysed reaction is ATP + H2O + 4 H(+)(in) = ADP + phosphate + 5 H(+)(out). Produces ATP from ADP in the presence of a proton gradient across the membrane. The alpha chain is a regulatory subunit. The polypeptide is ATP synthase subunit alpha (Xylella fastidiosa (strain 9a5c)).